The following is a 172-amino-acid chain: MORN repeat-containing protein 5 (172 aa).

MORN repeat units lie at residues tyrosine 8–lysine 30, tyrosine 31–arginine 53, and phenylalanine 54–glutamine 75.

It localises to the cell projection. It is found in the cilium. Its subcellular location is the flagellum. In Bos taurus (Bovine), this protein is MORN repeat-containing protein 5 (MORN5).